A 102-amino-acid chain; its full sequence is Serum amyloid A-5 protein (102 aa).

The segment at 68-102 is disordered; that stretch reads GRGHEDSMADQEANRWGRSGNDPNHYRPAGLPDKY. Basic and acidic residues predominate over residues 69-82; the sequence is RGHEDSMADQEANR.

Belongs to the SAA family. Expressed by the liver; secreted in plasma.

It is found in the secreted. Functionally, major acute phase reactant. Apolipoprotein of the HDL complex. The chain is Serum amyloid A-5 protein from Mesocricetus auratus (Golden hamster).